Consider the following 358-residue polypeptide: Chorismate synthase (358 aa).

Position 48 (Arg-48) interacts with NADP(+). FMN contacts are provided by residues 125-127 (RAS), Ser-277, 292-296 (KPIPS), and Arg-318.

The protein belongs to the chorismate synthase family. As to quaternary structure, homotetramer. FMNH2 serves as cofactor.

It catalyses the reaction 5-O-(1-carboxyvinyl)-3-phosphoshikimate = chorismate + phosphate. Its pathway is metabolic intermediate biosynthesis; chorismate biosynthesis; chorismate from D-erythrose 4-phosphate and phosphoenolpyruvate: step 7/7. In terms of biological role, catalyzes the anti-1,4-elimination of the C-3 phosphate and the C-6 proR hydrogen from 5-enolpyruvylshikimate-3-phosphate (EPSP) to yield chorismate, which is the branch point compound that serves as the starting substrate for the three terminal pathways of aromatic amino acid biosynthesis. This reaction introduces a second double bond into the aromatic ring system. This chain is Chorismate synthase, found in Desulfatibacillum aliphaticivorans.